A 213-amino-acid chain; its full sequence is LexA repressor (213 aa).

Positions 29–49 (VREICNAVGFKSTSTVHSYLE) form a DNA-binding region, H-T-H motif. Residues Ser-136 and Lys-173 each act as for autocatalytic cleavage activity in the active site.

The protein belongs to the peptidase S24 family. Homodimer.

It catalyses the reaction Hydrolysis of Ala-|-Gly bond in repressor LexA.. Its function is as follows. Represses a number of genes involved in the response to DNA damage (SOS response), including recA and lexA. In the presence of single-stranded DNA, RecA interacts with LexA causing an autocatalytic cleavage which disrupts the DNA-binding part of LexA, leading to derepression of the SOS regulon and eventually DNA repair. This is LexA repressor from Acetivibrio thermocellus (strain ATCC 27405 / DSM 1237 / JCM 9322 / NBRC 103400 / NCIMB 10682 / NRRL B-4536 / VPI 7372) (Clostridium thermocellum).